A 346-amino-acid chain; its full sequence is S-adenosylmethionine:tRNA ribosyltransferase-isomerase (346 aa).

It belongs to the QueA family. As to quaternary structure, monomer.

It localises to the cytoplasm. The enzyme catalyses 7-aminomethyl-7-carbaguanosine(34) in tRNA + S-adenosyl-L-methionine = epoxyqueuosine(34) in tRNA + adenine + L-methionine + 2 H(+). It functions in the pathway tRNA modification; tRNA-queuosine biosynthesis. Functionally, transfers and isomerizes the ribose moiety from AdoMet to the 7-aminomethyl group of 7-deazaguanine (preQ1-tRNA) to give epoxyqueuosine (oQ-tRNA). In Shewanella frigidimarina (strain NCIMB 400), this protein is S-adenosylmethionine:tRNA ribosyltransferase-isomerase.